A 467-amino-acid chain; its full sequence is Ammonium transporter Rh type C (467 aa).

Topologically, residues 1-3 are cytoplasmic; that stretch reads MRL. A helical membrane pass occupies residues 4 to 24; it reads RLPVVCFLWEIAMIVLFGIFV. Topologically, residues 25 to 55 are extracellular; it reads RYNDEADPHWSEFMKAQNITSDIQNDYYFRY. The N-linked (GlcNAc...) asparagine glycan is linked to Asn42. A helical membrane pass occupies residues 56–76; it reads PSFQDVHVMIFVGFGFLMTFL. The Cytoplasmic portion of the chain corresponds to 77–80; sequence KRYG. Residues 81-101 form a helical membrane-spanning segment; sequence FGSVAFNFLLAAFGIQWAILM. Over 102 to 119 the chain is Extracellular; the sequence is QGWFHTFKNGKILIGVES. A helical membrane pass occupies residues 120–139; sequence LINADFCVGSVCIAFGAILG. Residues 140–145 lie on the Cytoplasmic side of the membrane; the sequence is KVSPVQ. Residues 146 to 168 form a helical membrane-spanning segment; the sequence is IMVMTLFQVTLFAVNEWILLNLL. Residues 169 to 173 are Extracellular-facing; sequence HVNDA. A helical membrane pass occupies residues 174 to 194; sequence GGSMTIHTFGAYFGLTVAWIL. Residues 195–213 lie on the Cytoplasmic side of the membrane; sequence NRPRLKQTNDKEGSVYVSD. Residues 214–234 form a helical membrane-spanning segment; the sequence is LFSMIGTLFLWMFWPSFNSAV. Topologically, residues 235-245 are extracellular; sequence SYHGDAQHRAA. A helical transmembrane segment spans residues 246–266; the sequence is INTYCSLAACVLTTVAISSVV. Residues 267–271 are Cytoplasmic-facing; it reads NKKGK. A helical membrane pass occupies residues 272-292; sequence LEMVHIQNATLAGGVAVGTAA. At 293–295 the chain is on the extracellular side; that stretch reads EMM. Residues 296–316 form a helical membrane-spanning segment; that stretch reads LTPYGSLIVGFICGIVSTLGF. Residues 317-337 lie on the Cytoplasmic side of the membrane; it reads TYCSPFLSNKLRLHDTCGIHN. A helical membrane pass occupies residues 338 to 358; it reads LHAMPGLIGGIVGAVTAACAT. The Extracellular segment spans residues 359–390; it reads EAVYTADGLKKMFRFEGDYATRTPSMQGGYQA. Residues 391-411 traverse the membrane as a helical segment; it reads AGLCVSLAFGLVGGTVVGCIL. Residues 412 to 467 are Cytoplasmic-facing; the sequence is KLPIWGDPSDENCFDDEVYWELPEEDEEEHLGAANQYVTHLPENFKLPDRTEVAFK.

This sequence belongs to the ammonium transporter (TC 2.A.49) family. Rh subfamily. As to quaternary structure, homotrimer.

It is found in the apical cell membrane. Functions as an ammonia transporter. This chain is Ammonium transporter Rh type C (rhcg), found in Xenopus tropicalis (Western clawed frog).